Here is a 537-residue protein sequence, read N- to C-terminus: Tyrosine-protein kinase Yes (537 aa).

Over residues 1–22 the composition is skewed to basic and acidic residues; it reads MGCIKSKEDKGPSIKYRTEPKP. Positions 1-60 are disordered; it reads MGCIKSKEDKGPSIKYRTEPKPDPGSQYGADPTQATQSPGIKGPAPNFNSHSMTPFGGSS. Gly2 is lipidated: N-myristoyl glycine. The S-palmitoyl cysteine; in membrane form moiety is linked to residue Cys3. The 62-residue stretch at 85–146 folds into the SH3 domain; it reads GGVTVFVALY…PSNYVAPADS (62 aa). One can recognise an SH2 domain in the interval 152–249; that stretch reads WYFGKMGRKD…GLCYRLTTVC (98 aa). Residues 271–524 enclose the Protein kinase domain; that stretch reads LRLDVKLGQG…YIQSFLEDYF (254 aa). Residues 277-285 and Lys299 contribute to the ATP site; that span reads LGQGCFGEV. The active-site Proton acceptor is Asp390. The residue at position 420 (Tyr420) is a Phosphotyrosine; by autocatalysis. At Tyr531 the chain carries Phosphotyrosine; by CSK.

It belongs to the protein kinase superfamily. Tyr protein kinase family. SRC subfamily. In terms of processing, autophosphorylated at Tyr-420 inducing activation. Post-translationally, palmitoylation at Cys-3 promotes membrane localization.

It is found in the cell membrane. It localises to the cytoplasm. The protein localises to the cytoskeleton. The protein resides in the microtubule organizing center. Its subcellular location is the centrosome. It is found in the cytosol. It localises to the cell junction. The enzyme catalyses L-tyrosyl-[protein] + ATP = O-phospho-L-tyrosyl-[protein] + ADP + H(+). Its function is as follows. Non-receptor protein tyrosine kinase that is involved in the regulation of cell growth and survival, apoptosis, cell-cell adhesion, cytoskeleton remodeling, differentiation, G2/M progression and cytokinesis. The protein is Tyrosine-protein kinase Yes (yes1) of Xenopus laevis (African clawed frog).